Reading from the N-terminus, the 372-residue chain is Cobalt-precorrin-5B C(1)-methyltransferase (372 aa).

The protein belongs to the CbiD family.

The enzyme catalyses Co-precorrin-5B + S-adenosyl-L-methionine = Co-precorrin-6A + S-adenosyl-L-homocysteine. It functions in the pathway cofactor biosynthesis; adenosylcobalamin biosynthesis; cob(II)yrinate a,c-diamide from sirohydrochlorin (anaerobic route): step 6/10. In terms of biological role, catalyzes the methylation of C-1 in cobalt-precorrin-5B to form cobalt-precorrin-6A. The sequence is that of Cobalt-precorrin-5B C(1)-methyltransferase from Geobacillus thermodenitrificans (strain NG80-2).